We begin with the raw amino-acid sequence, 157 residues long: Nicotinate dehydrogenase small FeS subunit (157 aa).

The 2Fe-2S ferredoxin-type domain occupies 4 to 80; it reads ITINLNLNGE…ESTIITLEGV (77 aa). The [2Fe-2S] cluster site is built by Cys-42, Cys-47, Cys-50, Cys-62, Cys-101, Cys-104, Cys-136, and Cys-138.

Heterooctamer of NDHM, NDHL, NDHS and NDHF. Dimer of heterotetramers. It depends on [2Fe-2S] cluster as a cofactor.

The catalysed reaction is nicotinate + NADP(+) + H2O = 6-hydroxynicotinate + NADPH + H(+). The protein operates within cofactor degradation; nicotinate degradation; 6-hydroxynicotinate from nicotinate: step 1/1. Reversibly inactivated by selenide and sulfide. Not inhibited by cyanide. In terms of biological role, catalyzes the hydroxylation of nicotinate to 6-hydroxynicotinate. Also active against 2-pyrazinecarboxylic acid, but inactive against other nicotinate analogs. The protein is Nicotinate dehydrogenase small FeS subunit (ndhS) of Eubacterium barkeri (Clostridium barkeri).